Reading from the N-terminus, the 376-residue chain is Putative glutamate--cysteine ligase 2 (376 aa).

The protein belongs to the glutamate--cysteine ligase type 2 family. YbdK subfamily.

The catalysed reaction is L-cysteine + L-glutamate + ATP = gamma-L-glutamyl-L-cysteine + ADP + phosphate + H(+). In terms of biological role, ATP-dependent carboxylate-amine ligase which exhibits weak glutamate--cysteine ligase activity. This Mycobacterium bovis (strain ATCC BAA-935 / AF2122/97) protein is Putative glutamate--cysteine ligase 2.